Here is a 503-residue protein sequence, read N- to C-terminus: Maturase K (503 aa).

The protein belongs to the intron maturase 2 family. MatK subfamily.

The protein localises to the plastid. The protein resides in the chloroplast. In terms of biological role, usually encoded in the trnK tRNA gene intron. Probably assists in splicing its own and other chloroplast group II introns. The chain is Maturase K from Vicia faba (Broad bean).